The primary structure comprises 342 residues: Antihemorrhagic factor HSF (342 aa).

The N-terminal stretch at 1–19 (MNSLVALVLLGQIIGSTLS) is a signal peptide. Cystatin fetuin-A-type domains are found at residues 22-130 (VRGD…VKCH) and 141-254 (RNCS…SNCV). Residues 23-25 (RGD) carry the Cell attachment site motif. An indispensable for metalloproteinase inhibition region spans residues 24 to 108 (GDLECDDKEA…RQQHNHAVEM (85 aa)). 6 disulfide bridges follow: C28/C332, C85/C96, C110/C129, C143/C146, C205/C217, and C230/C253. A glycan (N-linked (GlcNAc...) asparagine) is linked at N142. N204 carries N-linked (GlcNAc...) asparagine glycosylation. N-linked (GlcNAc...) asparagine glycosylation occurs at N282.

It belongs to the fetuin family. Post-translationally, cys-63 may exist in a mixed disulfide form with a thiol compound such as glutathione. As to expression, expressed by the liver.

Its subcellular location is the secreted. Its function is as follows. Inhibits hemorrhagic and proteolytic activities of metalloproteinases (HR1A, HR1B, HR2a, HR2b and H2 proteinase from T.flavodidis and brevilysins H3, H4, H6 and L4 from A.halys brevicaudus). Has no effect on brevilysins H2. Has no effect on papain and cathepsin-B. This is Antihemorrhagic factor HSF from Protobothrops flavoviridis (Habu).